Here is a 219-residue protein sequence, read N- to C-terminus: 2,5-diamino-6-ribosylamino-4(3H)-pyrimidinone 5'-phosphate reductase (219 aa).

NADP(+) is bound by residues T52, D56, 87–90 (SRCR), V134, and 156–159 (GGTL).

It belongs to the HTP reductase family. Homodimer.

The enzyme catalyses 2,5-diamino-6-(1-D-ribitylamino)pyrimidin-4(3H)-one 5'-phosphate + NADP(+) = 2,5-diamino-6-(1-D-ribosylamino)pyrimidin-4(3H)-one 5'-phosphate + NADPH + H(+). It carries out the reaction 2,5-diamino-6-(1-D-ribitylamino)pyrimidin-4(3H)-one 5'-phosphate + NAD(+) = 2,5-diamino-6-(1-D-ribosylamino)pyrimidin-4(3H)-one 5'-phosphate + NADH + H(+). It participates in cofactor biosynthesis; riboflavin biosynthesis. Its function is as follows. Catalyzes an early step in riboflavin biosynthesis, the NADPH-dependent reduction of the ribose side chain of 2,5-diamino-6-ribosylamino-4(3H)-pyrimidinone 5'-phosphate, yielding 2,5-diamino-6-ribitylamino-4(3H)-pyrimidinone 5'-phosphate. This is 2,5-diamino-6-ribosylamino-4(3H)-pyrimidinone 5'-phosphate reductase from Archaeoglobus fulgidus (strain ATCC 49558 / DSM 4304 / JCM 9628 / NBRC 100126 / VC-16).